The following is a 325-amino-acid chain: MSIKEFAKNAREAYFTLPNGDKIPSIGLGTWRSGKDETKNAVCAALKAGYRHIDTAHIYGNEKEIGEGIRESGVPRTDIWVTSKLWCNAHRAGLVPLALEKTLQDLNLEYIDAYLIHWPFALLSGPEELPRNEKGELIYEDVPIEETWQAMEELLETGKVRYIGISNFNNEYLDRVLKIAKVKPTIHQMELHPYLPQTEYLEKHKKLQIHVSAYSPLANQNDAYNSDISKLIEHKTLVDIANARGEGITPANIAISWAVKRGTSVLPKSVNESRIVSNFLYIPLTDKEMEAINNIGVVRRFSHGKFAPKPMFVGLQDGTPKQTHA.

Tyr-59 serves as the catalytic Proton donor. Residue His-117 participates in substrate binding.

It belongs to the aldo/keto reductase family.

The protein localises to the cytoplasm. It localises to the nucleus. This is an uncharacterized protein from Schizosaccharomyces pombe (strain 972 / ATCC 24843) (Fission yeast).